A 97-amino-acid polypeptide reads, in one-letter code: Transcription and mRNA export factor SUS1 (97 aa).

Belongs to the ENY2 family. In terms of assembly, component of the nuclear pore complex (NPC)-associated TREX-2 complex (transcription and export complex 2), composed of at least SUS1, SAC3, THP1, SEM1, and CDC31. TREX-2 contains 2 SUS1 chains. The TREX-2 complex interacts with the nucleoporin NUP1. Component of the 1.8 MDa SAGA transcription coactivator-HAT complex. SAGA is built of 5 distinct domains with specialized functions. Within the SAGA complex, SUS1, SGF11, SGF73 and UBP8 form an additional subcomplex of SAGA called the DUB module (deubiquitination module). Interacts directly with THP1, SAC3, SGF11, and with the RNA polymerase II.

The protein localises to the nucleus. It is found in the nucleoplasm. The protein resides in the cytoplasm. Its subcellular location is the P-body. Its function is as follows. Involved in mRNA export coupled transcription activation by association with both the TREX-2 and the SAGA complexes. At the promoters, SAGA is required for recruitment of the basal transcription machinery. It influences RNA polymerase II transcriptional activity through different activities such as TBP interaction and promoter selectivity, interaction with transcription activators, and chromatin modification through histone acetylation and deubiquitination. Within the SAGA complex, participates in a subcomplex required for deubiquitination of H2B and for the maintenance of steady-state H3 methylation levels. The TREX-2 complex functions in docking export-competent ribonucleoprotein particles (mRNPs) to the nuclear entrance of the nuclear pore complex (nuclear basket). TREX-2 participates in mRNA export and accurate chromatin positioning in the nucleus by tethering genes to the nuclear periphery. May also be involved in cytoplasmic mRNA decay by interaction with components of P-bodies. This Meyerozyma guilliermondii (strain ATCC 6260 / CBS 566 / DSM 6381 / JCM 1539 / NBRC 10279 / NRRL Y-324) (Yeast) protein is Transcription and mRNA export factor SUS1.